The following is a 424-amino-acid chain: Arginine biosynthesis bifunctional protein ArgJ (424 aa).

Thr172, Lys198, Thr209, Glu296, Asn419, and Ser424 together coordinate substrate. Thr209 functions as the Nucleophile in the catalytic mechanism.

Belongs to the ArgJ family. As to quaternary structure, heterotetramer of two alpha and two beta chains.

Its subcellular location is the cytoplasm. The catalysed reaction is N(2)-acetyl-L-ornithine + L-glutamate = N-acetyl-L-glutamate + L-ornithine. It carries out the reaction L-glutamate + acetyl-CoA = N-acetyl-L-glutamate + CoA + H(+). The protein operates within amino-acid biosynthesis; L-arginine biosynthesis; L-ornithine and N-acetyl-L-glutamate from L-glutamate and N(2)-acetyl-L-ornithine (cyclic): step 1/1. It participates in amino-acid biosynthesis; L-arginine biosynthesis; N(2)-acetyl-L-ornithine from L-glutamate: step 1/4. Catalyzes two activities which are involved in the cyclic version of arginine biosynthesis: the synthesis of N-acetylglutamate from glutamate and acetyl-CoA as the acetyl donor, and of ornithine by transacetylation between N(2)-acetylornithine and glutamate. The sequence is that of Arginine biosynthesis bifunctional protein ArgJ from Gluconobacter oxydans (strain 621H) (Gluconobacter suboxydans).